The sequence spans 987 residues: Collagen alpha-1(I) chain (987 aa).

A compositionally biased stretch (pro residues) spans 1–21 (SVPGPMGPSGPRGLPGPPGPG). The tract at residues 1–987 (SVPGPMGPSG…PGPPGPPGPP (987 aa)) is disordered. A 4-hydroxyproline mark is found at Pro-15, Pro-18, Pro-20, Pro-29, Pro-32, Pro-35, Pro-50, Pro-65, Pro-71, Pro-80, and Pro-86. The span at 23–41 (QGFQGPPGEPGEPGSSGPM) shows a compositional bias: low complexity. The span at 53–67 (NGDDGEAGKPGRPGE) shows a compositional bias: basic and acidic residues. A 5-hydroxylysine; alternate modification is found at Lys-89. Lys-89 carries an O-linked (Gal...) hydroxylysine; alternate glycan. Residue Ser-95 is modified to Phosphoserine. Residues 103 to 119 (DAGPAGPKGEPGSPGEN) show a composition bias toward low complexity. A 4-hydroxyproline mark is found at Pro-113, Pro-116, Pro-122, Pro-131, Pro-137, Pro-158, Pro-167, Pro-170, Pro-197, Pro-200, Pro-212, Pro-218, Pro-227, Pro-233, Pro-236, and Pro-251. Residues 137–155 (PGASGPAGARGNDGAAGAA) show a composition bias toward low complexity. Residues 157-169 (PPGPTGPAGPPGF) are compositionally biased toward pro residues. A compositionally biased stretch (low complexity) spans 203-253 (AGAAGPAGNPGADGQPGAKGANGAPGIAGAPGFPGARGPSGPQGPSGAPGP). Position 254 is a 5-hydroxylysine (Lys-254). Residues Pro-260, Pro-263, Pro-275, Pro-284, Pro-299, Pro-305, Pro-314, and Pro-320 each carry the 4-hydroxyproline modification. A compositionally biased stretch (gly residues) spans 309–318 (GERGGPGSRG). Lys-329 is modified (5-hydroxylysine). 24 positions are modified to 4-hydroxyproline: Pro-338, Pro-347, Pro-353, Pro-359, Pro-368, Pro-371, Pro-380, Pro-389, Pro-395, Pro-407, Pro-416, Pro-425, Pro-428, Pro-446, Pro-468, Pro-474, Pro-480, Pro-486, Pro-492, Pro-504, Pro-513, Pro-526, Pro-532, and Pro-541. Residues 362-388 (KGLTGSPGSPGPDGKTGPPGPAGQDGR) show a composition bias toward low complexity. The span at 397–416 (ARGQAGVMGFPGPKGAAGEP) shows a compositional bias: low complexity. The span at 458 to 483 (QGPAPGFQGLPGPAGPPGEAGKPGEQ) shows a compositional bias: low complexity. A 5-hydroxylysine modification is found at Lys-553. Residues Pro-559, Pro-574, and Pro-580 each carry the 4-hydroxyproline modification. A compositionally biased stretch (low complexity) spans 586–600 (SGPSGPAGPTGARGA). The residue at position 589 (Ser-589) is a Phosphoserine. 8 positions are modified to 4-hydroxyproline: Pro-601, Pro-607, Pro-610, Pro-619, Pro-625, Pro-643, Pro-652, and Pro-661. Positions 613–640 (AGFAGPPGADGQPGAKGEPGDAGAKGDA) are enriched in low complexity. A compositionally biased stretch (pro residues) spans 642-654 (PPGPAGPTGPPGP). Lys-664 is modified (5-hydroxylysine). Low complexity predominate over residues 669–685 (SAGPPGATGFPGAAGRV). Pro-673 and Pro-679 each carry 4-hydroxyproline. Pro-687 carries the 3-hydroxyproline modification. 16 positions are modified to 4-hydroxyproline: Pro-688, Pro-697, Pro-700, Pro-721, Pro-730, Pro-738, Pro-747, Pro-765, Pro-774, Pro-777, Pro-783, Pro-798, Pro-804, Pro-810, Pro-819, and Pro-825. The segment covering 714–723 (ETGPAGRPGE) has biased composition (low complexity). Over residues 735-747 (KGSPGADGPAGAP) the composition is skewed to low complexity. Over residues 797–807 (PPGPMGPPGLA) the composition is skewed to pro residues. Low complexity predominate over residues 809–824 (PPGESGREGSPGAEGS). Lys-834 is subject to 5-hydroxylysine. Residues 843–858 (AGPPGAPGAPGAPGPV) show a composition bias toward pro residues. 4-hydroxyproline occurs at positions 846, 849, and 852. Over residues 879–893 (AGPAGARGPAGPQGP) the composition is skewed to low complexity. Over residues 894–905 (RGDKGETGEQGD) the composition is skewed to basic and acidic residues. 5-hydroxylysine is present on Lys-897. 4 positions are modified to 4-hydroxyproline: Pro-918, Pro-921, Pro-939, and Pro-954. Positions 921–954 (PGEQGPSGASGPAGPRGPPGSAGSPGKDGLNGLP) are enriched in low complexity. Pro-959 carries the post-translational modification 3-hydroxyproline. Pro-960 carries the post-translational modification 4-hydroxyproline. A compositionally biased stretch (pro residues) spans 972–987 (VGPPGPPGPPGPPGPP). Pro-974 carries the 3-hydroxyproline modification. Pro-975 is modified (4-hydroxyproline). Pro-977 is subject to 3-hydroxyproline. Pro-978 carries the post-translational modification 4-hydroxyproline. Pro-980 carries the post-translational modification 3-hydroxyproline. Residues Pro-981, Pro-984, and Pro-987 each carry the 4-hydroxyproline modification.

It belongs to the fibrillar collagen family. As to quaternary structure, trimers of one alpha 2(I) and two alpha 1(I) chains. Post-translationally, contains mostly 4-hydroxyproline. Proline residues at the third position of the tripeptide repeating unit (G-X-Y) are hydroxylated in some or all of the chains. In terms of processing, contains 3-hydroxyproline at a few sites. This modification occurs on the first proline residue in the sequence motif Gly-Pro-Hyp, where Hyp is 4-hydroxyproline. Lysine residues at the third position of the tripeptide repeating unit (G-X-Y) are 5-hydroxylated in some or all of the chains. Post-translationally, O-glycosylated on hydroxylated lysine residues. The O-linked glycan consists of a Glc-Gal disaccharide. Expressed in bones.

Its subcellular location is the secreted. It localises to the extracellular space. The protein localises to the extracellular matrix. In terms of biological role, type I collagen is a member of group I collagen (fibrillar forming collagen). This Glossotherium robustum (Ground sloth) protein is Collagen alpha-1(I) chain.